We begin with the raw amino-acid sequence, 217 residues long: Small ribosomal subunit protein uS3 (217 aa).

In terms of domain architecture, KH type-2 spans 38–106 (IRKFLKKRLS…KVTLDIQEVR (69 aa)).

This sequence belongs to the universal ribosomal protein uS3 family. Part of the 30S ribosomal subunit. Forms a tight complex with proteins S10 and S14.

Binds the lower part of the 30S subunit head. Binds mRNA in the 70S ribosome, positioning it for translation. This Desulfotalea psychrophila (strain LSv54 / DSM 12343) protein is Small ribosomal subunit protein uS3.